The sequence spans 483 residues: Glutamyl-tRNA(Gln) amidotransferase subunit A (483 aa).

Active-site charge relay system residues include Lys76 and Ser151. Residue Ser175 is the Acyl-ester intermediate of the active site.

This sequence belongs to the amidase family. GatA subfamily. In terms of assembly, heterotrimer of A, B and C subunits.

The catalysed reaction is L-glutamyl-tRNA(Gln) + L-glutamine + ATP + H2O = L-glutaminyl-tRNA(Gln) + L-glutamate + ADP + phosphate + H(+). In terms of biological role, allows the formation of correctly charged Gln-tRNA(Gln) through the transamidation of misacylated Glu-tRNA(Gln) in organisms which lack glutaminyl-tRNA synthetase. The reaction takes place in the presence of glutamine and ATP through an activated gamma-phospho-Glu-tRNA(Gln). In Pseudomonas syringae pv. tomato (strain ATCC BAA-871 / DC3000), this protein is Glutamyl-tRNA(Gln) amidotransferase subunit A.